The chain runs to 936 residues: MSSLNLSAGPEPVSERPDDAAAIEAETRLRNDIRLLGRILGDTVREQEGQSVFDLVENIRQTSIRFHRDDDKTARAELAAILDGMSIQDTMRIVRAFSYFSHLANIAEDQNNIRQMRAGSTAGSAPRAGLLAKTLAHARQEGISAAELRKFFATALVSPVLTAHPTEVRRKSTMDREMQIAGLLDQRDRVQLTADEWTDNEERLRRAVETLWKTNLLRRTKLTVLDEVTNGLSFYDYTFLREVPRLHSALEDRLADAAKAEGANAEGELASFLRMGSWIGGDRDGNPFVTAEVLHGTLKLQSTRVLRYYLEELHELGSELSLASHLAGTTDTVKALAETSPDTSPHRKYEPYRLAVSGIYARLAATALKLEVENLRAPVGEAEPYASAQDFKADLDAIHLSLTTHHSGVIARGRLRQLRRAIDCFGFHLASLDMRQNSAVHERTIGELMDAARPGTSYAVLDEDARIALLISELRSTRPLTSMFVKYSDETVGELAVFREAAKAHATYGAAAIPQCIISMTKGVSDLLELAVLLKEVGLIDPSGRSAINVVPLFETIEDLQACAKIMDRLLSIPEYRRLVDSRGSVQEVMLGYSDSNKDGGFVTSGWELYKAEIGLIEIFEHHGVRLRLFHGRGGSVGRGGGPSYDAIVAQPGGAVNGQIRITEQGEIITSKYSNVEVGRNNLEILAAATLEASLLQPKRVAPHRDYLEAMEQLSALAFKAYRGLVYETDGFVDYFWASTVINEISTLNIGSRPASRKKTRAIEDLRAIPWVFSWAQCRLMLPGWYGFGSAVSAWVTEHPEKGIAFLQAMYQEWPFFRTLLSNMDMVLSKSSIGIASRYAELVEDTAIRDRIFSRIRAEWHSSIDYLLAIMQQDHLLQSNPLLERSIRHRFPYLDPLNHVQVQLLREHRTHDPDEQVLRGVQLTINGISAGLRNSG.

A disordered region spans residues 1–20 (MSSLNLSAGPEPVSERPDDA). Catalysis depends on residues His164 and Lys598.

Belongs to the PEPCase type 1 family. Mg(2+) is required as a cofactor.

It catalyses the reaction oxaloacetate + phosphate = phosphoenolpyruvate + hydrogencarbonate. Forms oxaloacetate, a four-carbon dicarboxylic acid source for the tricarboxylic acid cycle. This chain is Phosphoenolpyruvate carboxylase (ppc), found in Rhodopseudomonas palustris (strain ATCC BAA-98 / CGA009).